The primary structure comprises 178 residues: uncharacterized protein (178 aa).

This is an uncharacterized protein from Schizosaccharomyces pombe (strain 972 / ATCC 24843) (Fission yeast).